The primary structure comprises 332 residues: MALPDFTMRQLLEAGVHFGHQAHRWNPKMADFIFGARNNIHIIDLAQTVPLMHRALQAVSDTVAKGGRILFVGTKRQAQDGVADAAKRSAQYFVNSRWLGGTLTNWKTVSGSIRRLRQLEEMLGSAEGSQYTKKERLTLQRERDKLDRSLGGIKDMGGLPDLIFVIDTNKEDIAIQEAQRLGIPVAAIVDTNCDPKGITYVVPGNDDAGRAIALYCDLIARAAIDGISRAQGDAGIDVGALAAPPQEDAVEASKTEGFQGLAGPRGVADDLKKLSGVSGAIEKKLNDLGIFHYWQIAELDSATAHKIGEEVGLPARVDGWVSQSKSLTADAE.

Belongs to the universal ribosomal protein uS2 family.

In Afipia carboxidovorans (strain ATCC 49405 / DSM 1227 / KCTC 32145 / OM5) (Oligotropha carboxidovorans), this protein is Small ribosomal subunit protein uS2.